A 69-amino-acid chain; its full sequence is Cold shock-like protein CspC (69 aa).

Positions 6–66 (GQVKWFNESK…GQKGPAAVNV (61 aa)) constitute a CSD domain.

The protein resides in the cytoplasm. In Buchnera aphidicola subsp. Acyrthosiphon pisum (strain APS) (Acyrthosiphon pisum symbiotic bacterium), this protein is Cold shock-like protein CspC (cspC).